The primary structure comprises 229 residues: MENPLYNDWSLLLEDEFKKDYYLRLRSFLKKEYTEEKIHPAMEDIFNALHFTPFHKVKVVILGQDPYHGPDQAHGLSFSVQPGITIPPSLKNIFKELTHEFGMSMPTHGHLTHWAKQGVLLLNNVLTVREGKAHSHRGQGWEVFTDKVIQTLNQKDHPVVFLLWGGAAQKKGELIDTNKHIILKAPHPSPLSAYRGFFESNHFSKANQILHKNNVEEIDWTLPESPSQG.

Aspartate 65 (proton acceptor) is an active-site residue.

It belongs to the uracil-DNA glycosylase (UDG) superfamily. UNG family.

The protein localises to the cytoplasm. The catalysed reaction is Hydrolyzes single-stranded DNA or mismatched double-stranded DNA and polynucleotides, releasing free uracil.. Its function is as follows. Excises uracil residues from the DNA which can arise as a result of misincorporation of dUMP residues by DNA polymerase or due to deamination of cytosine. This Oceanobacillus iheyensis (strain DSM 14371 / CIP 107618 / JCM 11309 / KCTC 3954 / HTE831) protein is Uracil-DNA glycosylase.